The primary structure comprises 321 residues: Beta-ketoacyl-[acyl-carrier-protein] synthase III (321 aa).

Active-site residues include Cys115 and His248. The tract at residues 249-253 is ACP-binding; sequence QANIR. Residue Asn278 is part of the active site.

This sequence belongs to the thiolase-like superfamily. FabH family. As to quaternary structure, homodimer.

The protein localises to the cytoplasm. It catalyses the reaction malonyl-[ACP] + acetyl-CoA + H(+) = 3-oxobutanoyl-[ACP] + CO2 + CoA. It participates in lipid metabolism; fatty acid biosynthesis. In terms of biological role, catalyzes the condensation reaction of fatty acid synthesis by the addition to an acyl acceptor of two carbons from malonyl-ACP. Catalyzes the first condensation reaction which initiates fatty acid synthesis and may therefore play a role in governing the total rate of fatty acid production. Possesses both acetoacetyl-ACP synthase and acetyl transacylase activities. Its substrate specificity determines the biosynthesis of branched-chain and/or straight-chain of fatty acids. This Azoarcus sp. (strain BH72) protein is Beta-ketoacyl-[acyl-carrier-protein] synthase III.